The chain runs to 172 residues: Protein nemuri (172 aa).

The N-terminal stretch at Met1–Ala25 is a signal peptide. The disordered stretch occupies residues Arg27–Ala172. Composition is skewed to basic and acidic residues over residues Arg35–Ser50, Asp58–Thr90, and Thr97–Ala108. Residues Asp45 to Arg74 adopt a coiled-coil conformation. Residues Arg109–Ala172 show a composition bias toward basic residues.

As to expression, detected in the brain where it accumulates in the dorsal fan-shaped body following sleep deprivation (at protein level). Expressed in the adult body.

It is found in the secreted. Its function is as follows. Antimicrobial protein which is essential for the homeostatic regulation of sleep. Promotes sleep following sleep deprivation or bacterial infection and increases survival following bacterial infection. Likely to promote survival to bacterial infection in two ways; by contributing to the innate immune response and by promoting sleep during sickness to aid recovery. This Drosophila melanogaster (Fruit fly) protein is Protein nemuri.